The chain runs to 267 residues: NAD kinase 2 (267 aa).

Asp52 acts as the Proton acceptor in catalysis. NAD(+)-binding positions include 52–53 (DG), 124–125 (NE), Arg151, Asp153, 164–169 (TAYNKS), and Ala188.

It belongs to the NAD kinase family. A divalent metal cation serves as cofactor.

It is found in the cytoplasm. The enzyme catalyses NAD(+) + ATP = ADP + NADP(+) + H(+). In terms of biological role, involved in the regulation of the intracellular balance of NAD and NADP, and is a key enzyme in the biosynthesis of NADP. Catalyzes specifically the phosphorylation on 2'-hydroxyl of the adenosine moiety of NAD to yield NADP. This is NAD kinase 2 from Bacillus subtilis (strain 168).